Reading from the N-terminus, the 385-residue chain is Polyketide synthase 1 (385 aa).

Cys157 is an active-site residue.

It belongs to the thiolase-like superfamily. Chalcone/stilbene synthases family. As to expression, expressed in glandular trichomes.

The protein resides in the cytoplasm. In terms of biological role, polyketide synthase responsible for the biosynthesis of secondary metabolites. This Cannabis sativa (Hemp) protein is Polyketide synthase 1 (PKSG1).